Here is a 350-residue protein sequence, read N- to C-terminus: MTKHYLNSKYQSEQRSSAMKKITMGTASIILGSLVYIGADSQQVNAATEATNAPNNQSTQVSQATSQPINFQVQKDGSSEKSHMDDYMQHPGKVIKQNNKYYFQTVLNNASFWKEYKFYNANNQELATTVVNDNKKADTRTINVAVEPGYKSLTTKVHIVVPQINYNHRYTTHLEFEKAIPTLADAAKPNNVKPVQPKPAQPKTPTEQTKPVQPKVEKVKPTVTTTSKVEDNHSTKVVSTDTTKDQTKTQTAHTVKTAQTAQEQNKVQTPVKDVATAKSESNNQAVSDNKSQQTNKVTKHNETPKQASKAKELPKTGLTSVDNFISTVAFATLALLGSLSLLLFKRKESK.

An N-terminal signal peptide occupies residues 1-46; that stretch reads MTKHYLNSKYQSEQRSSAMKKITMGTASIILGSLVYIGADSQQVNA. In terms of domain architecture, NEAT spans 62–184; the sequence is SQATSQPINF…EFEKAIPTLA (123 aa). Residues Lys-75, Ser-82, and Tyr-166 each coordinate heme. Positions 188 to 314 are disordered; the sequence is KPNNVKPVQP…KQASKAKELP (127 aa). Over residues 203 to 214 the composition is skewed to low complexity; it reads KTPTEQTKPVQP. Polar residues-rich tracts occupy residues 252–268 and 278–296; these read AHTVKTAQTAQEQNKVQ and KSESNNQAVSDNKSQQTNK. Positions 299 to 314 are enriched in basic and acidic residues; it reads KHNETPKQASKAKELP. An LPXTG sorting signal motif is present at residues 313 to 317; that stretch reads LPKTG. Pentaglycyl murein peptidoglycan amidated threonine is present on Thr-316. A propeptide spans 317–350 (removed by sortase A); it reads GLTSVDNFISTVAFATLALLGSLSLLLFKRKESK.

It belongs to the IsdA family. In terms of assembly, monomer. Interacts with IsdC. Interacts with IsdB.

It localises to the secreted. Its subcellular location is the cell wall. Its function is as follows. Cell wall-anchored surface receptor that participates in the extraction of heme from oxidized methemoglobin/metHb to enable growth on hemoglobin as a sole iron source. Receives heme from IsdB and transfers it to IsdC. Also plays a role in the inhibition of host immune response. Protects S.aureus against the bactericidal protease activity of apolactoferrin. Decreases bacterial cellular hydrophobicity, which renders S.aureus resistant to bactericidal human skin fatty acids as well as to beta-defensins and cathelicidin. Also binds fibronectin and chains B-beta and gamma of fibrinogen, promoting clumping of S.aureus with fibrinogen. Involved in adherence of S.aureus to human desquamated nasal epithelial cells and is required for nasal colonization. This is Iron-regulated surface determinant protein A (isdA) from Staphylococcus aureus (strain COL).